The sequence spans 167 residues: Small ribosomal subunit protein uS3m (167 aa).

Residues 1–35 (MAWSASVRGLGQRVLACSRELPGAWRTLHTSAVCA) constitute a mitochondrion transit peptide.

Belongs to the universal ribosomal protein uS3 family. Component of the mitochondrial ribosome small subunit (28S) which comprises a 12S rRNA and about 30 distinct proteins.

It localises to the mitochondrion. The chain is Small ribosomal subunit protein uS3m (Mrps24) from Mus musculus (Mouse).